Consider the following 255-residue polypeptide: tRNA (guanine-N(1)-)-methyltransferase (255 aa).

Residues G113 and 133–138 (IGDYVL) each bind S-adenosyl-L-methionine.

This sequence belongs to the RNA methyltransferase TrmD family. In terms of assembly, homodimer.

It is found in the cytoplasm. The enzyme catalyses guanosine(37) in tRNA + S-adenosyl-L-methionine = N(1)-methylguanosine(37) in tRNA + S-adenosyl-L-homocysteine + H(+). Specifically methylates guanosine-37 in various tRNAs. This chain is tRNA (guanine-N(1)-)-methyltransferase, found in Escherichia coli O81 (strain ED1a).